A 359-amino-acid chain; its full sequence is UDP-N-acetylglucosamine--N-acetylmuramyl-(pentapeptide) pyrophosphoryl-undecaprenol N-acetylglucosamine transferase (359 aa).

UDP-N-acetyl-alpha-D-glucosamine is bound by residues 15 to 17 (TGG), asparagine 127, arginine 166, serine 191, isoleucine 245, 264 to 269 (ALTVSE), and glutamine 290.

It belongs to the glycosyltransferase 28 family. MurG subfamily.

The protein resides in the cell inner membrane. The catalysed reaction is di-trans,octa-cis-undecaprenyl diphospho-N-acetyl-alpha-D-muramoyl-L-alanyl-D-glutamyl-meso-2,6-diaminopimeloyl-D-alanyl-D-alanine + UDP-N-acetyl-alpha-D-glucosamine = di-trans,octa-cis-undecaprenyl diphospho-[N-acetyl-alpha-D-glucosaminyl-(1-&gt;4)]-N-acetyl-alpha-D-muramoyl-L-alanyl-D-glutamyl-meso-2,6-diaminopimeloyl-D-alanyl-D-alanine + UDP + H(+). It participates in cell wall biogenesis; peptidoglycan biosynthesis. In terms of biological role, cell wall formation. Catalyzes the transfer of a GlcNAc subunit on undecaprenyl-pyrophosphoryl-MurNAc-pentapeptide (lipid intermediate I) to form undecaprenyl-pyrophosphoryl-MurNAc-(pentapeptide)GlcNAc (lipid intermediate II). This Pseudomonas putida (strain ATCC 47054 / DSM 6125 / CFBP 8728 / NCIMB 11950 / KT2440) protein is UDP-N-acetylglucosamine--N-acetylmuramyl-(pentapeptide) pyrophosphoryl-undecaprenol N-acetylglucosamine transferase.